Consider the following 409-residue polypeptide: F-box protein At3g17320 (409 aa).

The F-box domain occupies 1-47 (MTKISDLPRDLAEEVLSRVPVTYLRAIRFTCKKWNTLTKRRSFTKKL).

This Arabidopsis thaliana (Mouse-ear cress) protein is F-box protein At3g17320.